Consider the following 508-residue polypeptide: DNA polymerase II small subunit (508 aa).

The segment covering 66-80 (ASSAAQTSAPASTPP) has biased composition (low complexity). The tract at residues 66–122 (ASSAAQTSAPASTPPDEATTHTDPSATDTPPNHDGGRAATADARSVEIDGDMTGAST) is disordered. Over residues 86–95 (HTDPSATDTP) the composition is skewed to polar residues.

Belongs to the DNA polymerase delta/II small subunit family. As to quaternary structure, heterodimer of a large subunit and a small subunit.

It catalyses the reaction DNA(n) + a 2'-deoxyribonucleoside 5'-triphosphate = DNA(n+1) + diphosphate. The enzyme catalyses Exonucleolytic cleavage in the 3'- to 5'-direction to yield nucleoside 5'-phosphates.. Possesses two activities: a DNA synthesis (polymerase) and an exonucleolytic activity that degrades single-stranded DNA in the 3' to 5' direction. Has a template-primer preference which is characteristic of a replicative DNA polymerase. This is DNA polymerase II small subunit from Halobacterium salinarum (strain ATCC 29341 / DSM 671 / R1).